The sequence spans 47 residues: Photosystem II reaction center protein K (47 aa).

A propeptide spanning residues 1-10 (MASFTLDLLA) is cleaved from the precursor. Residues 19-39 (FSPLIDILPLIPVFFLLLAFV) form a helical membrane-spanning segment.

It belongs to the PsbK family. In terms of assembly, PSII is composed of 1 copy each of membrane proteins PsbA, PsbB, PsbC, PsbD, PsbE, PsbF, PsbH, PsbI, PsbJ, PsbK, PsbL, PsbM, PsbT, PsbX, PsbY, PsbZ, Psb30/Ycf12, peripheral proteins PsbO, CyanoQ (PsbQ), PsbU, PsbV and a large number of cofactors. It forms dimeric complexes.

It is found in the cellular thylakoid membrane. One of the components of the core complex of photosystem II (PSII). PSII is a light-driven water:plastoquinone oxidoreductase that uses light energy to abstract electrons from H(2)O, generating O(2) and a proton gradient subsequently used for ATP formation. It consists of a core antenna complex that captures photons, and an electron transfer chain that converts photonic excitation into a charge separation. This is Photosystem II reaction center protein K from Parasynechococcus marenigrum (strain WH8102).